Consider the following 228-residue polypeptide: ATP-dependent dethiobiotin synthetase BioD (228 aa).

Residue 12-17 (EIGKTT) participates in ATP binding. Position 16 (threonine 16) interacts with Mg(2+). Residue lysine 37 is part of the active site. Residue serine 41 participates in substrate binding. Residues aspartate 54, 116–119 (EGAG), and 205–207 (PRL) contribute to the ATP site. Mg(2+) is bound by residues aspartate 54 and glutamate 116.

It belongs to the dethiobiotin synthetase family. As to quaternary structure, homodimer. It depends on Mg(2+) as a cofactor.

It is found in the cytoplasm. It carries out the reaction (7R,8S)-7,8-diammoniononanoate + CO2 + ATP = (4R,5S)-dethiobiotin + ADP + phosphate + 3 H(+). It functions in the pathway cofactor biosynthesis; biotin biosynthesis; biotin from 7,8-diaminononanoate: step 1/2. Catalyzes a mechanistically unusual reaction, the ATP-dependent insertion of CO2 between the N7 and N8 nitrogen atoms of 7,8-diaminopelargonic acid (DAPA, also called 7,8-diammoniononanoate) to form a ureido ring. The sequence is that of ATP-dependent dethiobiotin synthetase BioD from Pseudomonas aeruginosa (strain LESB58).